The sequence spans 755 residues: 3-isopropylmalate dehydratase (755 aa).

[4Fe-4S] cluster-binding residues include cysteine 353, cysteine 413, and cysteine 416. Disordered regions lie at residues glycine 427 to glycine 446, leucine 471 to proline 493, and aspartate 510 to methionine 529. Over residues aspartate 510–glycine 528 the composition is skewed to low complexity.

It belongs to the aconitase/IPM isomerase family. In terms of assembly, monomer. The cofactor is [4Fe-4S] cluster.

It carries out the reaction (2R,3S)-3-isopropylmalate = (2S)-2-isopropylmalate. The protein operates within amino-acid biosynthesis; L-leucine biosynthesis; L-leucine from 3-methyl-2-oxobutanoate: step 2/4. In terms of biological role, catalyzes the isomerization between 2-isopropylmalate and 3-isopropylmalate, via the formation of 2-isopropylmaleate. The chain is 3-isopropylmalate dehydratase (LEUA) from Rhizomucor pusillus.